Consider the following 69-residue polypeptide: Protease inhibitor carrapatin (69 aa).

The BPTI/Kunitz inhibitor domain occupies cysteine 8–cysteine 58. Disulfide bonds link cysteine 8/cysteine 58, cysteine 17/cysteine 41, and cysteine 33/cysteine 54.

It localises to the secreted. Serine protease inhibitor. The protein is Protease inhibitor carrapatin of Rhipicephalus microplus (Cattle tick).